The primary structure comprises 777 residues: B3 domain-containing protein REM-like 1 (777 aa).

Positions 97 to 193 form a DNA-binding region, TF-B3 1; that stretch reads FVTFTLAPVD…TPVLSLCFEE (97 aa). Disordered regions lie at residues 200 to 248 and 344 to 391; these read VGEE…TSPS and KSSS…ESSS. Positions 218–243 are enriched in basic and acidic residues; sequence KIVKDDNNKDESSTWKREGNHLRCKD. The segment at residues 252–347 is a DNA-binding region (TF-B3 2); it reads TLTVTITPDS…TPVLSIKSSS (96 aa). The segment covering 344 to 368 has biased composition (polar residues); that stretch reads KSSSGKGQSEFSKESLSIKPSSGNM. A compositionally biased stretch (basic and acidic residues) spans 370–388; the sequence is KKVENNREASRKYPPRSRE. DNA-binding regions (TF-B3) lie at residues 582–676 and 683–777; these read FLTL…RDSS and FLTL…FYTK.

It is found in the nucleus. This Arabidopsis thaliana (Mouse-ear cress) protein is B3 domain-containing protein REM-like 1.